The sequence spans 453 residues: Nuclear distribution protein PAC1 (453 aa).

In terms of domain architecture, LisH spans 19–51 (QKDELHKSILDYFKTNNLHESFATLMREANQEG). The stretch at 69-96 (TSVIRLQKKIMEMESRISQLQEELSAAP) forms a coiled coil. WD repeat units follow at residues 120 to 161 (GHRL…RTLK), 162 to 201 (GHTKAVQDVDFDSKGNYVLSCSSDLSIKVWDANNDYKNIK), 205 to 244 (GHDHSVSSVRFLPGDDYIVSASRDKTIKIWEFSTGFCTKT), 247 to 286 (GHAEWVRSAIPSDDAKWLVSCSTDQTARVWDVSSGETKVE), 314 to 355 (LDPN…KTLT), 356 to 395 (GHDNWVRGLAFSPNGKSLLSVSDDKTMRLWDLQSGRCTRT), and 413 to 452 (IEAPIPPAQDGEEAGRKQPEARTVNVVATSSVDLTIKIWT).

The protein belongs to the WD repeat LIS1/nudF family. In terms of assembly, self-associates. Interacts with NDL1 and dynein.

The protein resides in the cytoplasm. The protein localises to the cytoskeleton. It localises to the spindle pole. Its function is as follows. Positively regulates the activity of the minus-end directed microtubule motor protein dynein. May enhance dynein-mediated microtubule sliding by targeting dynein to the microtubule plus end. Required for nuclear migration during vegetative growth as well as development. Required for localization of dynein to the mitotic spindle poles. Recruits additional proteins to the dynein complex at SPBs. Required for retrograde early endosome (EE) transport from the hyphal tip. The polypeptide is Nuclear distribution protein PAC1 (Mycosarcoma maydis (Corn smut fungus)).